The sequence spans 372 residues: 3-dehydroquinate synthase (372 aa).

NAD(+) contacts are provided by residues 113 to 117 (GVIGD), 137 to 138 (TS), lysine 150, lysine 159, and 177 to 180 (TLKT). Residues glutamate 192, histidine 257, and histidine 274 each contribute to the Zn(2+) site.

This sequence belongs to the sugar phosphate cyclases superfamily. Dehydroquinate synthase family. The cofactor is Co(2+). Zn(2+) is required as a cofactor. It depends on NAD(+) as a cofactor.

The protein resides in the cytoplasm. It catalyses the reaction 7-phospho-2-dehydro-3-deoxy-D-arabino-heptonate = 3-dehydroquinate + phosphate. It participates in metabolic intermediate biosynthesis; chorismate biosynthesis; chorismate from D-erythrose 4-phosphate and phosphoenolpyruvate: step 2/7. Functionally, catalyzes the conversion of 3-deoxy-D-arabino-heptulosonate 7-phosphate (DAHP) to dehydroquinate (DHQ). The chain is 3-dehydroquinate synthase from Acaryochloris marina (strain MBIC 11017).